Here is a 201-residue protein sequence, read N- to C-terminus: Recombination protein RecR (201 aa).

The C4-type zinc-finger motif lies at 60–75 (CKKCFNLTSEDECEIC). The 95-residue stretch at 83-177 (KLICVVAETK…KVTRIAYGLP (95 aa)) folds into the Toprim domain.

It belongs to the RecR family.

Functionally, may play a role in DNA repair. It seems to be involved in an RecBC-independent recombinational process of DNA repair. It may act with RecF and RecO. The chain is Recombination protein RecR from Prochlorococcus marinus (strain MIT 9215).